The following is a 238-amino-acid chain: RNA-free ribonuclease P (238 aa).

The protein belongs to the HARP family.

The catalysed reaction is Endonucleolytic cleavage of RNA, removing 5'-extranucleotides from tRNA precursor.. In terms of biological role, RNA-free RNase P that catalyzes the removal of the 5'-leader sequence from pre-tRNA to produce the mature 5'-terminus. The chain is RNA-free ribonuclease P from Hyperthermus butylicus (strain DSM 5456 / JCM 9403 / PLM1-5).